Reading from the N-terminus, the 116-residue chain is Large ribosomal subunit protein bL20 (116 aa).

This sequence belongs to the bacterial ribosomal protein bL20 family.

Functionally, binds directly to 23S ribosomal RNA and is necessary for the in vitro assembly process of the 50S ribosomal subunit. It is not involved in the protein synthesizing functions of that subunit. The chain is Large ribosomal subunit protein bL20 (rplT) from Helicobacter pylori (strain ATCC 700392 / 26695) (Campylobacter pylori).